We begin with the raw amino-acid sequence, 70 residues long: Conotoxin TxMMSK-02 (70 aa).

The first 20 residues, 1-20, serve as a signal peptide directing secretion; the sequence is MMSKLGALLTICLLLFSLTA. A propeptide spanning residues 21 to 53 is cleaved from the precursor; it reads VPLDGDQHADQPAQRLQDRIPTEDHPLFDPNKR. 3 disulfide bridges follow: Cys-54–Cys-68, Cys-55–Cys-64, and Cys-60–Cys-67. Pro-66 carries the 4-hydroxyproline modification. Tyr-69 carries the post-translational modification Tyrosine amide.

The protein belongs to the conotoxin M superfamily. Expressed by the venom duct.

It localises to the secreted. This is Conotoxin TxMMSK-02 from Conus textile (Cloth-of-gold cone).